The following is an 87-amino-acid chain: Cell division topological specificity factor (87 aa).

The protein belongs to the MinE family.

In terms of biological role, prevents the cell division inhibition by proteins MinC and MinD at internal division sites while permitting inhibition at polar sites. This ensures cell division at the proper site by restricting the formation of a division septum at the midpoint of the long axis of the cell. The protein is Cell division topological specificity factor of Acidiphilium cryptum (strain JF-5).